Consider the following 141-residue polypeptide: Putative antiporter subunit mnhB2 (141 aa).

4 helical membrane-spanning segments follow: residues 10-30 (TVTKIVVFILLTFGFYVFFAG), 35-55 (GGGFIGGLIFSSAFILMFLAF), 70-90 (KLMIVGAIISALTAIVPVFFG), and 116-136 (LFELGILLTVVGVIVTIMLAL).

It belongs to the CPA3 antiporters (TC 2.A.63) subunit B family. As to quaternary structure, may form a heterooligomeric complex that consists of seven subunits: mnhA2, mnhB2, mnhC2, mnhD2, mnhE2, mnhF2 and mnhG2.

The protein resides in the cell membrane. The sequence is that of Putative antiporter subunit mnhB2 (mnhB2) from Staphylococcus haemolyticus (strain JCSC1435).